Consider the following 138-residue polypeptide: MEQTFFMIKPDGVKRGFIGEVISRIERRGFSIDRLEVRHADADILKRHYAELTDRPFFPTLVDYMTSGPVIIEVISGEEVISTWRTMMGSTNPKDALPGTIRGDFAQAPSPNQATCNIVHGSDSPESATREIAIWFNN.

6 residues coordinate ATP: K9, F57, R85, T91, R102, and N112. Catalysis depends on H120, which acts as the Pros-phosphohistidine intermediate.

Belongs to the NDK family. As to quaternary structure, homotetramer. It depends on Mg(2+) as a cofactor.

It localises to the cytoplasm. The enzyme catalyses a 2'-deoxyribonucleoside 5'-diphosphate + ATP = a 2'-deoxyribonucleoside 5'-triphosphate + ADP. The catalysed reaction is a ribonucleoside 5'-diphosphate + ATP = a ribonucleoside 5'-triphosphate + ADP. Functionally, major role in the synthesis of nucleoside triphosphates other than ATP. The ATP gamma phosphate is transferred to the NDP beta phosphate via a ping-pong mechanism, using a phosphorylated active-site intermediate. The polypeptide is Nucleoside diphosphate kinase (Streptococcus agalactiae serotype III (strain NEM316)).